Reading from the N-terminus, the 100-residue chain is Nucleoid-associated protein RoseRS_1534 (100 aa).

Belongs to the YbaB/EbfC family. As to quaternary structure, homodimer.

It is found in the cytoplasm. The protein localises to the nucleoid. Binds to DNA and alters its conformation. May be involved in regulation of gene expression, nucleoid organization and DNA protection. The polypeptide is Nucleoid-associated protein RoseRS_1534 (Roseiflexus sp. (strain RS-1)).